Reading from the N-terminus, the 2036-residue chain is Ral GTPase-activating protein subunit alpha-1 (2036 aa).

2 disordered regions span residues 343-384 and 476-497; these read LVSR…SSLC and EEGE…RNSS. Over residues 345-365 the composition is skewed to basic and acidic residues; that stretch reads SREESKNDNADKTDRTTEPEQ. 2 stretches are compositionally biased toward polar residues: residues 366 to 384 and 486 to 497; these read SHSN…SSLC and GTNTADHVRNSS. A phosphoserine mark is found at Ser-711 and Ser-721. The interval 715 to 753 is disordered; it reads SFSRGWSRDQPGQAPMRQRSATTTGSPGTEKARSIVRQK. Thr-754 carries the phosphothreonine modification. Position 773 is a phosphoserine (Ser-773). Thr-778 carries the post-translational modification Phosphothreonine. Phosphoserine is present on residues Ser-797, Ser-860, Ser-861, and Ser-864. Disordered stretches follow at residues 849–910 and 982–1009; these read SGNA…SDSH and TITG…STLN. A compositionally biased stretch (polar residues) spans 850–863; sequence GNASTMTRRGSSPG. Over residues 895–910 the composition is skewed to low complexity; it reads SPASAGSSDLISSDSH. Over residues 983–1009 the composition is skewed to polar residues; that stretch reads ITGSESASPVHSPLGSRSQTPSPSTLN. Phosphoserine is present on residues Ser-986, Ser-990, Ser-994, and Ser-1000. The residue at position 1002 (Thr-1002) is a Phosphothreonine. Residues Ser-1004 and Ser-1478 each carry the phosphoserine modification. The interval 1327 to 2035 is minimal domain that binds to TCF3/E12; sequence FTNKTVAHVA…PYHHLPSDAD (709 aa). Positions 1716–1744 form a coiled coil; the sequence is KQENDVINAILKQHTEEKEFVEKHFNDLN. Residues 1796–2004 form the Rap-GAP domain; that stretch reads LRNLDSRQCR…EERARYLQTI (209 aa).

Component of the heterodimeric RalGAP1 complex with RALGAPB. Heterodimerization is required for activity. Interacts with the HLH region of TCF3/isoform E12. Widely expressed.

It is found in the cytoplasm. It localises to the nucleus. Its function is as follows. Catalytic subunit of the heterodimeric RalGAP1 complex which acts as a GTPase activator for the Ras-like small GTPases RALA and RALB. This Homo sapiens (Human) protein is Ral GTPase-activating protein subunit alpha-1 (RALGAPA1).